The following is a 219-amino-acid chain: 7-cyano-7-deazaguanine synthase (219 aa).

ATP is bound at residue 10–20 (FSGGQDSTTCL). 4 residues coordinate Zn(2+): Cys-188, Cys-197, Cys-200, and Cys-203.

It belongs to the QueC family. In terms of assembly, homodimer. The cofactor is Zn(2+).

It catalyses the reaction 7-carboxy-7-deazaguanine + NH4(+) + ATP = 7-cyano-7-deazaguanine + ADP + phosphate + H2O + H(+). The protein operates within purine metabolism; 7-cyano-7-deazaguanine biosynthesis. Catalyzes the ATP-dependent conversion of 7-carboxy-7-deazaguanine (CDG) to 7-cyano-7-deazaguanine (preQ(0)). This chain is 7-cyano-7-deazaguanine synthase, found in Clostridium botulinum (strain Langeland / NCTC 10281 / Type F).